The primary structure comprises 651 residues: Apical membrane antigen 1-like protein (651 aa).

The signal sequence occupies residues 1 to 41 (MPTESRSILARAEETRCRHLSRLLRAGLVFLLCDVLTSCLA). Residues 42-81 (TPELQNTVIRSSKAHHLQLLFSSRSTPAVKFPLDATLSAP) constitute a propeptide, removed in mature form. Residues 42-570 (TPELQNTVIR…VEKEGSGGNT (529 aa)) are Extracellular-facing. 7 cysteine pairs are disulfide-bonded: cysteine 141-cysteine 309, cysteine 215-cysteine 248, cysteine 264-cysteine 277, cysteine 327-cysteine 417, cysteine 347-cysteine 408, cysteine 441-cysteine 463, and cysteine 453-cysteine 475. An N-linked (GlcNAc...) asparagine glycan is attached at asparagine 230. A 1; approximate repeat occupies 483 to 486 (PPVK). Positions 483 to 531 (PPVKPPVEPPVEPPVEPPVEPPVEPPVEPPVEPPVEPPVEPPVVEPPTE) are 12 x 4 AA approximate tandem-repeats of P-P-V-E. The segment covering 483-547 (PPVKPPVEPP…EPPVVLPPTP (65 aa)) has biased composition (pro residues). The interval 483-567 (PPVKPPVEPP…DETVEKEGSG (85 aa)) is disordered. 9 tandem repeats follow at residues 487–490 (PPVE), 491–494 (PPVE), 495–498 (PPVE), 499–502 (PPVE), 503–506 (PPVE), 507–510 (PPVE), 511–514 (PPVE), 515–518 (PPVE), and 519–522 (PPVE). One copy of the 11; approximate repeat lies at 523 to 527 (PPVVE). One copy of the 12; approximate repeat lies at 528–531 (PPTE). Residues 571–591 (ALIAGSVLGMLIILALVGTCV) form a helical membrane-spanning segment. Topologically, residues 592–651 (GFYYRKRPLPPTERPTVEASGGREVEGPSDVAVPPDHSWWGEGEHETESLLGSRAVDAEF) are cytoplasmic. The segment at 598–651 (RPLPPTERPTVEASGGREVEGPSDVAVPPDHSWWGEGEHETESLLGSRAVDAEF) is disordered.

This sequence belongs to the apicomplexan parasites AMA1 family. Post-translationally, proteolytically cleaved within its transmembrane domain, releasing a soluble form from the cell surface.

The protein resides in the cell membrane. It is found in the secreted. Its function is as follows. May play a role in host cell invasion. This is Apical membrane antigen 1-like protein from Toxoplasma gondii (strain ATCC 50861 / VEG).